The sequence spans 394 residues: ATP-dependent RNA helicase fal1 (394 aa).

The Q motif signature appears at Ser21–Ser49. A Helicase ATP-binding domain is found at Ile52 to Ile222. Ala65–Thr72 provides a ligand contact to ATP. A Phosphoserine modification is found at Ser67. Residues Asp170–Asp173 carry the DEAD box motif. The region spanning Gly233–Val394 is the Helicase C-terminal domain.

Belongs to the DEAD box helicase family. DDX48/FAL1 subfamily.

It is found in the nucleus. The protein localises to the nucleolus. It carries out the reaction ATP + H2O = ADP + phosphate + H(+). In terms of biological role, ATP-dependent RNA helicase involved in 40S ribosomal subunit biogenesis. Required for the processing and cleavage of 35S pre-rRNA at sites A0, A1, and A2, leading to mature 18S rRNA. The chain is ATP-dependent RNA helicase fal1 (tif412) from Schizosaccharomyces pombe (strain 972 / ATCC 24843) (Fission yeast).